Reading from the N-terminus, the 142-residue chain is Cytochrome b5-related protein (142 aa).

The Cytochrome b5 heme-binding domain occupies 16–100 (PTYRNSAPVT…IAKYKVRDAY (85 aa)). Residues histidine 59 and histidine 82 each coordinate heme.

The protein belongs to the cytochrome b5 family.

Its function is as follows. May play a role in muscle cell metabolism. The chain is Cytochrome b5-related protein (Cyt-b5-r) from Drosophila virilis (Fruit fly).